The sequence spans 464 residues: Asparagine--tRNA ligase (464 aa).

It belongs to the class-II aminoacyl-tRNA synthetase family. As to quaternary structure, homodimer.

It localises to the cytoplasm. The enzyme catalyses tRNA(Asn) + L-asparagine + ATP = L-asparaginyl-tRNA(Asn) + AMP + diphosphate + H(+). The sequence is that of Asparagine--tRNA ligase from Cytophaga hutchinsonii (strain ATCC 33406 / DSM 1761 / CIP 103989 / NBRC 15051 / NCIMB 9469 / D465).